The following is a 158-amino-acid chain: Mitochondrial import inner membrane translocase subunit TIM14 (158 aa).

At Met1–Pro55 the chain is on the mitochondrial intermembrane side. Residues Val56–Ile78 form a helical membrane-spanning segment. The Mitochondrial matrix segment spans residues Arg79 to Lys158. The 57-residue stretch at Glu102 to Lys158 folds into the J domain.

Belongs to the TIM14 family. In terms of assembly, heterodimer with PAM16. Component of the PAM complex, at least composed of mtHsp70, MGE1, TIM44, PAM16, PAM17 and PAM18.

The protein resides in the mitochondrion inner membrane. Functionally, essential component of the PAM complex, a complex required for the translocation of transit peptide-containing proteins from the inner membrane into the mitochondrial matrix in an ATP-dependent manner. In the complex, it is required to stimulate activity of mtHSP70 (SSC1). This is Mitochondrial import inner membrane translocase subunit TIM14 (PAM18) from Eremothecium gossypii (strain ATCC 10895 / CBS 109.51 / FGSC 9923 / NRRL Y-1056) (Yeast).